The following is a 154-amino-acid chain: RxLR effector protein PITG_12737 (154 aa).

Positions 1–16 (MRVYFILILAVATVSG) are cleaved as a signal peptide. The RxLR-dEER motif lies at 42 to 58 (RLLRAELTTDETYPEER).

Belongs to the RxLR effector family.

It is found in the secreted. Its subcellular location is the host nucleus. The protein localises to the host cytoplasm. Effector that enhances P.infestans colonization of Nicotiana benthamiana leaves. The protein is RxLR effector protein PITG_12737 of Phytophthora infestans (strain T30-4) (Potato late blight agent).